We begin with the raw amino-acid sequence, 741 residues long: Cysteine--tRNA ligase, cytoplasmic (741 aa).

Cysteine 46 serves as a coordination point for Zn(2+). The short motif at 48 to 58 is the 'HIGH' region element; that stretch reads PTVYDASHMGH. Phosphoserine is present on serine 297. Residues cysteine 340, histidine 365, and glutamate 369 each contribute to the Zn(2+) site. The short motif at 398-402 is the 'KMSKS' region element; the sequence is KMSKS. Position 401 (lysine 401) interacts with ATP.

The protein belongs to the class-I aminoacyl-tRNA synthetase family. It depends on Zn(2+) as a cofactor.

The protein localises to the cytoplasm. It catalyses the reaction tRNA(Cys) + L-cysteine + ATP = L-cysteinyl-tRNA(Cys) + AMP + diphosphate. The sequence is that of Cysteine--tRNA ligase, cytoplasmic (Aats-cys) from Drosophila pseudoobscura pseudoobscura (Fruit fly).